Consider the following 227-residue polypeptide: Cytochrome c oxidase subunit 2 (227 aa).

Topologically, residues 1 to 14 (MAYPFQLGLQDATS) are mitochondrial intermembrane. A helical transmembrane segment spans residues 15–45 (PIMEELMNFHDHTLMIVFLISSLVLYIISLM). Residues 46–59 (LTTKLTHTSTMDAQ) lie on the Mitochondrial matrix side of the membrane. The chain crosses the membrane as a helical span at residues 60 to 87 (EVETIWTILPAAILILIALPSLRILYMM). Residues 88–227 (DEINNPVLTV…YFENWSASMI (140 aa)) are Mitochondrial intermembrane-facing. Histidine 161, cysteine 196, glutamate 198, cysteine 200, histidine 204, and methionine 207 together coordinate Cu cation. A Mg(2+)-binding site is contributed by glutamate 198.

The protein belongs to the cytochrome c oxidase subunit 2 family. As to quaternary structure, component of the cytochrome c oxidase (complex IV, CIV), a multisubunit enzyme composed of 14 subunits. The complex is composed of a catalytic core of 3 subunits MT-CO1, MT-CO2 and MT-CO3, encoded in the mitochondrial DNA, and 11 supernumerary subunits COX4I, COX5A, COX5B, COX6A, COX6B, COX6C, COX7A, COX7B, COX7C, COX8 and NDUFA4, which are encoded in the nuclear genome. The complex exists as a monomer or a dimer and forms supercomplexes (SCs) in the inner mitochondrial membrane with NADH-ubiquinone oxidoreductase (complex I, CI) and ubiquinol-cytochrome c oxidoreductase (cytochrome b-c1 complex, complex III, CIII), resulting in different assemblies (supercomplex SCI(1)III(2)IV(1) and megacomplex MCI(2)III(2)IV(2)). Found in a complex with TMEM177, COA6, COX18, COX20, SCO1 and SCO2. Interacts with TMEM177 in a COX20-dependent manner. Interacts with COX20. Interacts with COX16. Cu cation serves as cofactor.

The protein resides in the mitochondrion inner membrane. It carries out the reaction 4 Fe(II)-[cytochrome c] + O2 + 8 H(+)(in) = 4 Fe(III)-[cytochrome c] + 2 H2O + 4 H(+)(out). Functionally, component of the cytochrome c oxidase, the last enzyme in the mitochondrial electron transport chain which drives oxidative phosphorylation. The respiratory chain contains 3 multisubunit complexes succinate dehydrogenase (complex II, CII), ubiquinol-cytochrome c oxidoreductase (cytochrome b-c1 complex, complex III, CIII) and cytochrome c oxidase (complex IV, CIV), that cooperate to transfer electrons derived from NADH and succinate to molecular oxygen, creating an electrochemical gradient over the inner membrane that drives transmembrane transport and the ATP synthase. Cytochrome c oxidase is the component of the respiratory chain that catalyzes the reduction of oxygen to water. Electrons originating from reduced cytochrome c in the intermembrane space (IMS) are transferred via the dinuclear copper A center (CU(A)) of subunit 2 and heme A of subunit 1 to the active site in subunit 1, a binuclear center (BNC) formed by heme A3 and copper B (CU(B)). The BNC reduces molecular oxygen to 2 water molecules using 4 electrons from cytochrome c in the IMS and 4 protons from the mitochondrial matrix. The protein is Cytochrome c oxidase subunit 2 (MT-CO2) of Leggadina forresti (Forrest's mouse).